The primary structure comprises 314 residues: Ferric-anguibactin transport system permease protein FatD (314 aa).

10 helical membrane-spanning segments follow: residues Met1 to Ala21, Val49 to Val69, Pro76 to Leu96, Glu103 to Ile123, Ala132 to Tyr152, Ile180 to Val200, Ile207 to Val226, Val230 to Ala252, Ile265 to Leu285, and Phe288 to Leu308.

Belongs to the binding-protein-dependent transport system permease family. FecCD subfamily. In terms of assembly, part of an iron transport system composed of the outer membrane receptor FatA, the periplasmic binding protein FatB and the inner membrane proteins FatC and FatD.

The protein localises to the cell inner membrane. In terms of biological role, involved in the uptake of iron in complex with the siderophore anguibactin. Responsible for the translocation of ferric-anguibactin across the cytoplasmic membrane. The protein is Ferric-anguibactin transport system permease protein FatD of Vibrio anguillarum (strain ATCC 68554 / 775) (Listonella anguillarum).